The sequence spans 639 residues: Threonine--tRNA ligase (639 aa).

The region spanning 1 to 61 (MIRITLPDNS…DHDARLQIIT (61 aa)) is the TGS domain. Residues 242 to 533 (DHRRLGRELD…LIEQHAGALP (292 aa)) are catalytic. Zn(2+) contacts are provided by cysteine 333, histidine 384, and histidine 510.

This sequence belongs to the class-II aminoacyl-tRNA synthetase family. In terms of assembly, homodimer. Zn(2+) serves as cofactor.

It localises to the cytoplasm. The enzyme catalyses tRNA(Thr) + L-threonine + ATP = L-threonyl-tRNA(Thr) + AMP + diphosphate + H(+). Functionally, catalyzes the attachment of threonine to tRNA(Thr) in a two-step reaction: L-threonine is first activated by ATP to form Thr-AMP and then transferred to the acceptor end of tRNA(Thr). Also edits incorrectly charged L-seryl-tRNA(Thr). The polypeptide is Threonine--tRNA ligase (Paracidovorax citrulli (strain AAC00-1) (Acidovorax citrulli)).